The primary structure comprises 78 residues: D-alanyl carrier protein (78 aa).

The 78-residue stretch at 1-78 (MNIQETVLNI…QIIQQVEALQ (78 aa)) folds into the Carrier domain. The residue at position 36 (S36) is an O-(pantetheine 4'-phosphoryl)serine.

The protein belongs to the DltC family. In terms of processing, 4'-phosphopantetheine is transferred from CoA to a specific serine of apo-DCP.

The protein resides in the cytoplasm. The protein operates within cell wall biogenesis; lipoteichoic acid biosynthesis. In terms of biological role, carrier protein involved in the D-alanylation of lipoteichoic acid (LTA). The loading of thioester-linked D-alanine onto DltC is catalyzed by D-alanine--D-alanyl carrier protein ligase DltA. The DltC-carried D-alanyl group is further transferred to cell membrane phosphatidylglycerol (PG) by forming an ester bond, probably catalyzed by DltD. D-alanylation of LTA plays an important role in modulating the properties of the cell wall in Gram-positive bacteria, influencing the net charge of the cell wall. In Enterococcus faecalis (strain ATCC 700802 / V583), this protein is D-alanyl carrier protein.